The sequence spans 318 residues: Dual specificity protein phosphatase 2 (318 aa).

The Rhodanese domain occupies 27–148 (EAERTLLLDC…FQTYCPDLCS (122 aa)). The Tyrosine-protein phosphatase domain occupies 176–317 (GPVEILPYLY…LLQLETQVLC (142 aa)). The Phosphocysteine intermediate role is filled by cysteine 261.

This sequence belongs to the protein-tyrosine phosphatase family. Non-receptor class dual specificity subfamily. As to quaternary structure, interacts with MAPK14; this interaction does not lead to catalytic activation of DUSP2 and dephosphrylation of MAPK14. As to expression, in hematopoietic tissues such as spleen and thymus.

It is found in the nucleus. It carries out the reaction O-phospho-L-tyrosyl-[protein] + H2O = L-tyrosyl-[protein] + phosphate. The catalysed reaction is O-phospho-L-threonyl-[protein] + H2O = L-threonyl-[protein] + phosphate. Functionally, dephosphorylates both phosphorylated Thr and Tyr residues in MAPK1, and dephosphorylation of phosphotyrosine is slightly faster than that of phosphothreonine. Can dephosphorylate MAPK1. In Mus musculus (Mouse), this protein is Dual specificity protein phosphatase 2.